Here is a 433-residue protein sequence, read N- to C-terminus: MSQKDSIRSVRAREIMDSRGNPTVEVDVTLEDGSFGRAAVPSGASTGEHEAVELRDGDKKRYGGKGVQKAVDNVNAKISKSILGLSATDQLQIDGTMIALDGTANKSKLGANAILGVSMAVAKAAAVHAGLPLYRYIGGTFARELPVPMMNIINGGAHADNNIDFQEFMILPVSAPNFKEALRMGAEVFHSLKTVLKGKGLNTAVGDEGGFAPNLTSNSEAIEVILTAIEKAGYKPDLDIKIGLDCAASEFYDEKKKKYILKAEKKPEKTAEELVEYYSNLVSKYPIITMEDGLDENDWSGWKKLSEKLGKKIQLVGDDLFVTNIKKLAQGIDKGIGNSILIKVNQIGSLTETLSAIEMAKKAQYTAVVSHRSGETEDATISHIAVATNSGQIKTGSLSRTDRIAKYNELLRIEEELGKNATYSGVNTFYNLR.

Positions 37–59 (RAAVPSGASTGEHEAVELRDGDK) are disordered. A compositionally biased stretch (basic and acidic residues) spans 47–59 (GEHEAVELRDGDK). Position 166 (Gln-166) interacts with (2R)-2-phosphoglycerate. Glu-208 (proton donor) is an active-site residue. Residues Asp-245, Glu-291, and Asp-318 each contribute to the Mg(2+) site. (2R)-2-phosphoglycerate contacts are provided by Lys-343, Arg-372, Ser-373, and Lys-394. Residue Lys-343 is the Proton acceptor of the active site.

This sequence belongs to the enolase family. Mg(2+) is required as a cofactor.

Its subcellular location is the cytoplasm. The protein localises to the secreted. It is found in the cell surface. The enzyme catalyses (2R)-2-phosphoglycerate = phosphoenolpyruvate + H2O. The protein operates within carbohydrate degradation; glycolysis; pyruvate from D-glyceraldehyde 3-phosphate: step 4/5. In terms of biological role, catalyzes the reversible conversion of 2-phosphoglycerate (2-PG) into phosphoenolpyruvate (PEP). It is essential for the degradation of carbohydrates via glycolysis. This is Enolase from Leptospira biflexa serovar Patoc (strain Patoc 1 / Ames).